We begin with the raw amino-acid sequence, 202 residues long: Transcriptional regulator SdrP (202 aa).

The 73-residue stretch at 117–189 folds into the HTH crp-type domain; sequence QRLKNRMAAA…YGKIQLLDLK (73 aa). The segment at residues 149–168 is a DNA-binding region (H-T-H motif); the sequence is HDELAAAVGSVRETVTKVIG.

In terms of assembly, homodimer.

Functionally, activates transcription. The consensus DNA-binding site of this transcriptional regulator is 5'-WWGTGAN(5-7)ACACWW-3' in which W is A or T and N is G, A, T or C. Regulated genes include those encoding proteins involved in nutrient and energy supply, redox control and polyadenylation of mRNA. Also regulates genes involved in oxidative stress response such as genes encoding manganese superoxide dismutase and catalase, and genes encoding a protein involved in nucleotide excision repair of damaged DNA and putative proteins involved in redox control, protein degradation and transcriptional regulation. This chain is Transcriptional regulator SdrP, found in Thermus thermophilus (strain ATCC 27634 / DSM 579 / HB8).